We begin with the raw amino-acid sequence, 51 residues long: Large ribosomal subunit protein eL39 (51 aa).

Over residues 1 to 15 (MPSHKSFRTKQKLAK) the composition is skewed to basic residues. Residues 1–21 (MPSHKSFRTKQKLAKAARQNR) are disordered.

The protein belongs to the eukaryotic ribosomal protein eL39 family. Component of the large ribosomal subunit (LSU). Mature yeast ribosomes consist of a small (40S) and a large (60S) subunit. The 40S small subunit contains 1 molecule of ribosomal RNA (18S rRNA) and at least 33 different proteins. The large 60S subunit contains 3 rRNA molecules (25S, 5.8S and 5S rRNA) and at least 46 different proteins. eL39 interacts with yih1.

It is found in the cytoplasm. Its function is as follows. Component of the ribosome, a large ribonucleoprotein complex responsible for the synthesis of proteins in the cell. The small ribosomal subunit (SSU) binds messenger RNAs (mRNAs) and translates the encoded message by selecting cognate aminoacyl-transfer RNA (tRNA) molecules. The large subunit (LSU) contains the ribosomal catalytic site termed the peptidyl transferase center (PTC), which catalyzes the formation of peptide bonds, thereby polymerizing the amino acids delivered by tRNAs into a polypeptide chain. The nascent polypeptides leave the ribosome through a tunnel in the LSU and interact with protein factors that function in enzymatic processing, targeting, and the membrane insertion of nascent chains at the exit of the ribosomal tunnel. This is Large ribosomal subunit protein eL39 (rpl39) from Schizosaccharomyces pombe (strain 972 / ATCC 24843) (Fission yeast).